Here is a 308-residue protein sequence, read N- to C-terminus: Ribosomal RNA small subunit methyltransferase H (308 aa).

S-adenosyl-L-methionine contacts are provided by residues 34 to 36 (GGH), Asp-54, Phe-85, Asp-99, and Gln-106.

Belongs to the methyltransferase superfamily. RsmH family.

It localises to the cytoplasm. It catalyses the reaction cytidine(1402) in 16S rRNA + S-adenosyl-L-methionine = N(4)-methylcytidine(1402) in 16S rRNA + S-adenosyl-L-homocysteine + H(+). Its function is as follows. Specifically methylates the N4 position of cytidine in position 1402 (C1402) of 16S rRNA. The chain is Ribosomal RNA small subunit methyltransferase H from Dichelobacter nodosus (strain VCS1703A).